Consider the following 326-residue polypeptide: Vomeronasal type-1 receptor 100 (326 aa).

Residues methionine 1–threonine 32 lie on the Extracellular side of the membrane. A helical membrane pass occupies residues phenylalanine 33–phenylalanine 53. Over lysine 54–leucine 70 the chain is Cytoplasmic. Residues leucine 71–isoleucine 91 form a helical membrane-spanning segment. Over serine 92–leucine 104 the chain is Extracellular. Cysteine 101 and cysteine 188 are disulfide-bonded. The helical transmembrane segment at valine 105–alanine 127 threads the bilayer. At isoleucine 128 to serine 149 the chain is on the cytoplasmic side. A helical membrane pass occupies residues cysteine 150–isoleucine 170. Residues asparagine 171–aspartate 209 lie on the Extracellular side of the membrane. An N-linked (GlcNAc...) asparagine glycan is attached at asparagine 175. The chain crosses the membrane as a helical span at residues isoleucine 210–histidine 230. At arginine 231–glutamine 254 the chain is on the cytoplasmic side. Residues threonine 255–cysteine 275 traverse the membrane as a helical segment. The Extracellular portion of the chain corresponds to serine 276–threonine 285. A helical membrane pass occupies residues serine 286–methionine 306. The Cytoplasmic portion of the chain corresponds to serine 307–valine 326.

Belongs to the G-protein coupled receptor 1 family. In terms of tissue distribution, expressed in 1-4% of neurons of the vomeronasal organ. Only one pheromone receptor gene may be expressed in a particular neuron. Not expressed in the main olfactory epithelium.

Its subcellular location is the cell membrane. Its function is as follows. Putative pheromone receptor implicated in the regulation of social as well as reproductive behavior. This Rattus norvegicus (Rat) protein is Vomeronasal type-1 receptor 100 (Vom1r100).